The primary structure comprises 421 residues: 4-hydroxy-3-methylbut-2-en-1-yl diphosphate synthase (flavodoxin) (421 aa).

4 residues coordinate [4Fe-4S] cluster: C311, C314, C357, and E364.

The protein belongs to the IspG family. It depends on [4Fe-4S] cluster as a cofactor.

The catalysed reaction is (2E)-4-hydroxy-3-methylbut-2-enyl diphosphate + oxidized [flavodoxin] + H2O + 2 H(+) = 2-C-methyl-D-erythritol 2,4-cyclic diphosphate + reduced [flavodoxin]. It participates in isoprenoid biosynthesis; isopentenyl diphosphate biosynthesis via DXP pathway; isopentenyl diphosphate from 1-deoxy-D-xylulose 5-phosphate: step 5/6. Converts 2C-methyl-D-erythritol 2,4-cyclodiphosphate (ME-2,4cPP) into 1-hydroxy-2-methyl-2-(E)-butenyl 4-diphosphate. This is 4-hydroxy-3-methylbut-2-en-1-yl diphosphate synthase (flavodoxin) from Xanthomonas oryzae pv. oryzae (strain MAFF 311018).